Reading from the N-terminus, the 752-residue chain is Photosystem I P700 chlorophyll a apoprotein A1 (752 aa).

8 consecutive transmembrane segments (helical) span residues 73 to 96 (IFSAHFGQLAVIFLWLSGMYFHGA), 159 to 182 (LYCTAIGGLGMAALMLFAGWFHYH), 198 to 222 (MNHHLAGLLGLGCLGWAGHQIHLSL), 294 to 312 (TAHHHLALAVLFLAAGHMY), 349 to 372 (WHAQLAINLAMMGSLSIIVAHHMY), 388 to 414 (LSLFTHHMWIGGFCVVGAGAHASIFMV), 436 to 458 (AIVSHLNWVCIFLGFHSFGLYIH), and 533 to 551 (FMVHHIHAFTIHVTVLILV). Positions 575 and 584 each coordinate [4Fe-4S] cluster. The next 2 helical transmembrane spans lie at 591–612 (HVFLGLFWMYNSLSVAIFHFSW) and 666–688 (LSAYGLIFLAAHFVWAFSLMFLF). Histidine 677 serves as a coordination point for chlorophyll a'. Chlorophyll a is bound by residues methionine 685 and tyrosine 693. Phylloquinone is bound at residue tryptophan 694. A helical membrane pass occupies residues 726–746 (AVGVAHYLLGGIGTTWAFFLA).

This sequence belongs to the PsaA/PsaB family. The PsaA/B heterodimer binds the P700 chlorophyll special pair and subsequent electron acceptors. PSI consists of a core antenna complex that captures photons, and an electron transfer chain that converts photonic excitation into a charge separation. The eukaryotic PSI reaction center is composed of at least 11 subunits. It depends on P700 is a chlorophyll a/chlorophyll a' dimer, A0 is one or more chlorophyll a, A1 is one or both phylloquinones and FX is a shared 4Fe-4S iron-sulfur center. as a cofactor.

It is found in the plastid. It localises to the chloroplast thylakoid membrane. The catalysed reaction is reduced [plastocyanin] + hnu + oxidized [2Fe-2S]-[ferredoxin] = oxidized [plastocyanin] + reduced [2Fe-2S]-[ferredoxin]. Functionally, psaA and PsaB bind P700, the primary electron donor of photosystem I (PSI), as well as the electron acceptors A0, A1 and FX. PSI is a plastocyanin/cytochrome c6-ferredoxin oxidoreductase, converting photonic excitation into a charge separation, which transfers an electron from the donor P700 chlorophyll pair to the spectroscopically characterized acceptors A0, A1, FX, FA and FB in turn. Oxidized P700 is reduced on the lumenal side of the thylakoid membrane by plastocyanin or cytochrome c6. This is Photosystem I P700 chlorophyll a apoprotein A1 from Porphyra purpurea (Red seaweed).